Here is a 541-residue protein sequence, read N- to C-terminus: Chaperonin GroEL 2 (541 aa).

Residues 29–32 (TLGP), 86–90 (DGTTT), glycine 413, 476–478 (NAA), and aspartate 492 each bind ATP.

This sequence belongs to the chaperonin (HSP60) family. Forms a cylinder of 14 subunits composed of two heptameric rings stacked back-to-back. Interacts with the co-chaperonin GroES.

The protein resides in the secreted. The protein localises to the capsule. It localises to the cell surface. Its subcellular location is the cell wall. The catalysed reaction is ATP + H2O + a folded polypeptide = ADP + phosphate + an unfolded polypeptide.. In terms of biological role, together with its co-chaperonin GroES, plays an essential role in assisting protein folding. The GroEL-GroES system forms a nano-cage that allows encapsulation of the non-native substrate proteins and provides a physical environment optimized to promote and accelerate protein folding. The polypeptide is Chaperonin GroEL 2 (Mycobacterium ulcerans (strain Agy99)).